A 561-amino-acid polypeptide reads, in one-letter code: MGVWKSMVWGVLLWHSQSGAICPVWPSARTIEEIARLQQQLADWNDIYWKQGVSAVDDSVYDQLSAKLVQWQRCVGQDVSSTPVSPPLNGTTTHPVAHTGVRKLADRQAVAQWMRGHSEFWVQPKVDGVAVTLVYQNGKLTRAISRGNGLQGEDWTQKIRQISSIPQTTRGALANAVLQGEIFLQLKGHIQQRMGGMNARSKVAGMLMRQKNTSALNSLGIFIWAWPDGPANMTERLSQLAKAGFSLTQKYSQMVKNASEVERARRSWLTSALPFVTDGVVIRMAKEPSSQYWRPGQGDWLAAWKYPPVAQVAQVSAIQFSVGKSGKISVIASLVPVMLDDKRVKRVNIGSVKRWEAWDIAPGDQILVSLAGQGIPRLDEVVWRSRERSKPVPPGNHFNSLTCFYASATCQEQFISRLVWLGSRAALGLDGMGEASWRALHQTHRFEHIFSWLALTPAEIANTPGFAKGKSELIWRQFNLARRQPFSRWVMAMDIPLTQAALQASGDRSWEQLLMRTDQHWRQLPATGERRAGRVSDWRDNPRIKALSRWLAAQHIPGFGT.

The N6-AMP-lysine intermediate role is filled by Lys-125.

This sequence belongs to the NAD-dependent DNA ligase family. LigB subfamily.

It carries out the reaction NAD(+) + (deoxyribonucleotide)n-3'-hydroxyl + 5'-phospho-(deoxyribonucleotide)m = (deoxyribonucleotide)n+m + AMP + beta-nicotinamide D-nucleotide.. Its function is as follows. Catalyzes the formation of phosphodiester linkages between 5'-phosphoryl and 3'-hydroxyl groups in double-stranded DNA using NAD as a coenzyme and as the energy source for the reaction. This is DNA ligase B from Salmonella arizonae (strain ATCC BAA-731 / CDC346-86 / RSK2980).